A 456-amino-acid polypeptide reads, in one-letter code: Adenylosuccinate synthetase isozyme 2 (456 aa).

The segment at 1–24 (MAFAETNPAASSLPNGDCGRPRAR) is disordered. Residues 39-45 (GDEGKGK) and 67-69 (GHT) each bind GTP. The active-site Proton acceptor is the aspartate 40. 2 residues coordinate Mg(2+): aspartate 40 and glycine 67. Residue aspartate 40 participates in substrate binding. Residues 40–43 (DEGK), 65–68 (NAGH), threonine 162, arginine 176, asparagine 255, threonine 270, and arginine 334 contribute to the IMP site. The Proton donor role is filled by histidine 68. 330–336 (VTTGRKR) provides a ligand contact to substrate. GTP-binding positions include arginine 336, 362–364 (KLD), and 444–447 (GVGK).

The protein belongs to the adenylosuccinate synthetase family. In terms of assembly, homodimer. Mg(2+) serves as cofactor. Widely expressed.

The protein localises to the cytoplasm. It localises to the mitochondrion. It carries out the reaction IMP + L-aspartate + GTP = N(6)-(1,2-dicarboxyethyl)-AMP + GDP + phosphate + 2 H(+). Its pathway is purine metabolism; AMP biosynthesis via de novo pathway; AMP from IMP: step 1/2. With respect to regulation, inhibited competitively by AMP and IMP and non-competitively by fructose 1,6-bisphosphate. Its function is as follows. Plays an important role in the de novo pathway and in the salvage pathway of purine nucleotide biosynthesis. Catalyzes the first committed step in the biosynthesis of AMP from IMP. This is Adenylosuccinate synthetase isozyme 2 from Sus scrofa (Pig).